Here is a 181-residue protein sequence, read N- to C-terminus: ATP synthase subunit delta (181 aa).

The protein belongs to the ATPase delta chain family. In terms of assembly, F-type ATPases have 2 components, F(1) - the catalytic core - and F(0) - the membrane proton channel. F(1) has five subunits: alpha(3), beta(3), gamma(1), delta(1), epsilon(1). F(0) has three main subunits: a(1), b(2) and c(10-14). The alpha and beta chains form an alternating ring which encloses part of the gamma chain. F(1) is attached to F(0) by a central stalk formed by the gamma and epsilon chains, while a peripheral stalk is formed by the delta and b chains.

It is found in the cell membrane. In terms of biological role, f(1)F(0) ATP synthase produces ATP from ADP in the presence of a proton or sodium gradient. F-type ATPases consist of two structural domains, F(1) containing the extramembraneous catalytic core and F(0) containing the membrane proton channel, linked together by a central stalk and a peripheral stalk. During catalysis, ATP synthesis in the catalytic domain of F(1) is coupled via a rotary mechanism of the central stalk subunits to proton translocation. Functionally, this protein is part of the stalk that links CF(0) to CF(1). It either transmits conformational changes from CF(0) to CF(1) or is implicated in proton conduction. The chain is ATP synthase subunit delta from Mycoplasmoides gallisepticum (strain R(low / passage 15 / clone 2)) (Mycoplasma gallisepticum).